The primary structure comprises 280 residues: Biotin carboxyl carrier protein of acetyl-CoA carboxylase 1, chloroplastic (280 aa).

The N-terminal 82 residues, 1–82 (MASSSFSVTS…SNAAKVDGPS (82 aa)), are a transit peptide targeting the chloroplast. Residues 52–75 (PSRSSYPVVKAQSNKVSTGASSNA) are compositionally biased toward polar residues. Disordered regions lie at residues 52–106 (PSRS…ATEE) and 164–215 (QPSY…GTFY). The segment covering 177 to 188 (PAAAAPAPSTPA) has biased composition (low complexity). Pro residues predominate over residues 189–198 (SLPPPSPPTP). The Biotinyl-binding domain maps to 203 to 279 (LPTVKSPMAG…SLDTPLFVVQ (77 aa)). Lysine 245 carries the N6-biotinyllysine modification.

Acetyl-CoA carboxylase is a heterohexamer composed of biotin carboxyl carrier protein, biotin carboxylase and 2 subunits each of ACCase subunit alpha and ACCase plastid-coded subunit beta (accD). In terms of tissue distribution, present in developing tissues from roots, leaves, flowers, siliques and seeds (at protein level).

It is found in the plastid. The protein localises to the chloroplast. The protein operates within lipid metabolism; fatty acid biosynthesis. Functionally, this protein is a component of the acetyl coenzyme A carboxylase complex; first, biotin carboxylase catalyzes the carboxylation of the carrier protein and then the transcarboxylase transfers the carboxyl group to form malonyl-CoA. The polypeptide is Biotin carboxyl carrier protein of acetyl-CoA carboxylase 1, chloroplastic (BCCP1) (Arabidopsis thaliana (Mouse-ear cress)).